Here is a 496-residue protein sequence, read N- to C-terminus: Glycerol kinase 2 (496 aa).

Thr11 contacts ADP. 3 residues coordinate ATP: Thr11, Thr12, and Ser13. Sn-glycerol 3-phosphate is bound at residue Thr11. Position 15 (Arg15) interacts with ADP. Sn-glycerol 3-phosphate-binding residues include Arg81, Glu82, Tyr133, and Asp242. Residues Arg81, Glu82, Tyr133, Asp242, and Gln243 each coordinate glycerol. The ADP site is built by Thr264 and Gly307. Residues Thr264, Gly307, Gln311, and Gly408 each coordinate ATP. Residues Gly408 and Asn412 each coordinate ADP.

The protein belongs to the FGGY kinase family.

It catalyses the reaction glycerol + ATP = sn-glycerol 3-phosphate + ADP + H(+). It participates in polyol metabolism; glycerol degradation via glycerol kinase pathway; sn-glycerol 3-phosphate from glycerol: step 1/1. With respect to regulation, inhibited by fructose 1,6-bisphosphate (FBP). Functionally, key enzyme in the regulation of glycerol uptake and metabolism. Catalyzes the phosphorylation of glycerol to yield sn-glycerol 3-phosphate. The protein is Glycerol kinase 2 of Thermotoga maritima (strain ATCC 43589 / DSM 3109 / JCM 10099 / NBRC 100826 / MSB8).